We begin with the raw amino-acid sequence, 1053 residues long: Translation initiation factor IF-2 (1053 aa).

Polar residues predominate over residues 1 to 20; sequence MSESKNSGENTLSVTPTKTL. A disordered region spans residues 1–442; sequence MSESKNSGEN…TATGGEEEER (442 aa). Composition is skewed to low complexity over residues 64–76 and 83–102; these read EAAPTPAPAATVT and RPAAPNPTAAPTTPPAAAVP. Pro residues-rich tracts occupy residues 131–141 and 150–161; these read PAQPKAEPVPA and APVPPVPAPSAP. The segment covering 178–220 has biased composition (low complexity); that stretch reads PVSQAKPIQTAPVQTAPAAQASASQTTGPRPVAAGPRPATGAA. Gly residues predominate over residues 255-264; that stretch reads GGRGGPGRGE. 2 stretches are compositionally biased toward basic and acidic residues: residues 279–288 and 295–353; these read LTDEEREARA and RIRE…EAKR. Positions 375–386 are enriched in low complexity; the sequence is TATAAAPAAAAP. The region spanning 550 to 720 is the tr-type G domain; the sequence is PRPPVVTIMG…ALQAELLDLK (171 aa). The interval 559 to 566 is G1; the sequence is GHVDHGKT. 559–566 lines the GTP pocket; sequence GHVDHGKT. Residues 584–588 are G2; sequence GITQH. The G3 stretch occupies residues 606 to 609; the sequence is DTPG. Residues 606–610 and 660–663 contribute to the GTP site; these read DTPGH and NKID. The tract at residues 660–663 is G4; the sequence is NKID. Residues 696 to 698 are G5; it reads SAT.

Belongs to the TRAFAC class translation factor GTPase superfamily. Classic translation factor GTPase family. IF-2 subfamily.

It is found in the cytoplasm. Functionally, one of the essential components for the initiation of protein synthesis. Protects formylmethionyl-tRNA from spontaneous hydrolysis and promotes its binding to the 30S ribosomal subunits. Also involved in the hydrolysis of GTP during the formation of the 70S ribosomal complex. The sequence is that of Translation initiation factor IF-2 from Beijerinckia indica subsp. indica (strain ATCC 9039 / DSM 1715 / NCIMB 8712).